A 308-amino-acid polypeptide reads, in one-letter code: Ribonuclease Z (308 aa).

Zn(2+) contacts are provided by His-61, His-63, Asp-65, His-66, His-142, Asp-211, and His-270. Asp-65 (proton acceptor) is an active-site residue.

The protein belongs to the RNase Z family. As to quaternary structure, homodimer. It depends on Zn(2+) as a cofactor.

It carries out the reaction Endonucleolytic cleavage of RNA, removing extra 3' nucleotides from tRNA precursor, generating 3' termini of tRNAs. A 3'-hydroxy group is left at the tRNA terminus and a 5'-phosphoryl group is left at the trailer molecule.. Functionally, zinc phosphodiesterase, which displays some tRNA 3'-processing endonuclease activity. Probably involved in tRNA maturation, by removing a 3'-trailer from precursor tRNA. This Clostridium beijerinckii (strain ATCC 51743 / NCIMB 8052) (Clostridium acetobutylicum) protein is Ribonuclease Z.